Here is a 952-residue protein sequence, read N- to C-terminus: Vacuolar protein sorting-associated protein 11 homolog (952 aa).

CHCR repeat units follow at residues 416–563 and 629–783; these read YLCT…EETT and NIGF…DCQD. Over residues 608-629 the composition is skewed to low complexity; it reads NNNQNNNSNNNNQNNNNNNNNN. Positions 608 to 632 are disordered; sequence NNNQNNNSNNNNQNNNNNNNNNIGF. A coiled-coil region spans residues 837–868; sequence YTQIRQYADETEKMRHEINELRTNSKIFQQTK. The segment at 869–905 adopts an RING-type; atypical zinc-finger fold; sequence CIACLLALDLPSVHFLCQHSFHQRCLGENERECPSCA.

This sequence belongs to the VPS11 family.

It is found in the vacuole membrane. Its function is as follows. May play a role in vesicle-mediated protein trafficking. The sequence is that of Vacuolar protein sorting-associated protein 11 homolog (vps11) from Dictyostelium discoideum (Social amoeba).